The sequence spans 141 residues: Small ribosomal subunit protein uS19 (141 aa).

Belongs to the universal ribosomal protein uS19 family.

Protein S19 forms a complex with S13 that binds strongly to the 16S ribosomal RNA. This is Small ribosomal subunit protein uS19 from Halorubrum lacusprofundi (strain ATCC 49239 / DSM 5036 / JCM 8891 / ACAM 34).